A 155-amino-acid polypeptide reads, in one-letter code: Basic phospholipase A2 PC1 (155 aa).

The signal sequence occupies residues 1-21 (MYPAHLLVLLAVCVSLLGASA). A propeptide spanning residues 22–27 (ISNRPR) is cleaved from the precursor. Intrachain disulfides connect Cys38–Cys98, Cys54–Cys144, Cys56–Cys72, Cys71–Cys125, Cys78–Cys118, Cys87–Cys111, and Cys105–Cys116. Ca(2+) is bound by residues Tyr55, Gly57, and Gly59. His75 is a catalytic residue. Residue Asp76 coordinates Ca(2+). Asp119 is an active-site residue.

The protein belongs to the phospholipase A2 family. Group I subfamily. D49 sub-subfamily. Requires Ca(2+) as cofactor. As to expression, expressed by the venom gland.

The protein localises to the secreted. The catalysed reaction is a 1,2-diacyl-sn-glycero-3-phosphocholine + H2O = a 1-acyl-sn-glycero-3-phosphocholine + a fatty acid + H(+). Its function is as follows. Snake venom phospholipase A2 (PLA2) that inhibits neuromuscular transmission by blocking acetylcholine release from the nerve termini. PLA2 catalyzes the calcium-dependent hydrolysis of the 2-acyl groups in 3-sn-phosphoglycerides. The chain is Basic phospholipase A2 PC1 from Laticauda colubrina (Yellow-lipped sea krait).